A 459-amino-acid chain; its full sequence is Cysteine--tRNA ligase (459 aa).

Zn(2+) is bound at residue Cys28. Residues 30 to 40 (VTVYDLCHFGH) carry the 'HIGH' region motif. Residues Cys209, His234, and Glu238 each coordinate Zn(2+). The 'KMSKS' region motif lies at 266–270 (KMSKS). Lys269 is a binding site for ATP.

It belongs to the class-I aminoacyl-tRNA synthetase family. As to quaternary structure, monomer. Requires Zn(2+) as cofactor.

The protein localises to the cytoplasm. It carries out the reaction tRNA(Cys) + L-cysteine + ATP = L-cysteinyl-tRNA(Cys) + AMP + diphosphate. The sequence is that of Cysteine--tRNA ligase from Glaesserella parasuis serovar 5 (strain SH0165) (Haemophilus parasuis).